A 419-amino-acid polypeptide reads, in one-letter code: Elongation factor Tu, chloroplastic (419 aa).

The 205-residue stretch at Lys10–Asp214 folds into the tr-type G domain. The segment at Gly19 to Thr26 is G1. Gly19–Thr26 provides a ligand contact to GTP. Thr26 lines the Mg(2+) pocket. The tract at residues Gly60 to Asn64 is G2. The interval Asp81 to Gly84 is G3. Residues Asp81–His85 and Asn136–Asp139 contribute to the GTP site. Residues Asn136–Asp139 form a G4 region. The segment at Ser174–Leu176 is G5.

It belongs to the TRAFAC class translation factor GTPase superfamily. Classic translation factor GTPase family. EF-Tu/EF-1A subfamily.

Its subcellular location is the plastid. It localises to the chloroplast. It carries out the reaction GTP + H2O = GDP + phosphate + H(+). In terms of biological role, GTP hydrolase that promotes the GTP-dependent binding of aminoacyl-tRNA to the A-site of ribosomes during protein biosynthesis. The polypeptide is Elongation factor Tu, chloroplastic (tufA) (Tetradesmus obliquus (Green alga)).